A 233-amino-acid chain; its full sequence is Glycerol-3-phosphate acyltransferase 5 (233 aa).

The next 5 membrane-spanning stretches (helical) occupy residues 3-23, 69-89, 116-136, 143-163, and 168-188; these read LVFI…MAYL, MILL…VGLF, LVMA…FGLF, VFLG…FFGI, and TISW…LMAP.

Belongs to the PlsY family. Probably interacts with PlsX.

It is found in the cell membrane. The catalysed reaction is an acyl phosphate + sn-glycerol 3-phosphate = a 1-acyl-sn-glycero-3-phosphate + phosphate. It participates in lipid metabolism; phospholipid metabolism. In terms of biological role, catalyzes the transfer of an acyl group from acyl-phosphate (acyl-PO(4)) to glycerol-3-phosphate (G3P) to form lysophosphatidic acid (LPA). This enzyme utilizes acyl-phosphate as fatty acyl donor, but not acyl-CoA or acyl-ACP. This Dehalococcoides mccartyi (strain ATCC BAA-2266 / KCTC 15142 / 195) (Dehalococcoides ethenogenes (strain 195)) protein is Glycerol-3-phosphate acyltransferase 5.